The chain runs to 154 residues: Putative protein heh-1 (154 aa).

The signal sequence occupies residues 1 to 15 (MKTVIFLALLGLAAA). Cystine bridges form between cysteine 39/cysteine 50 and cysteine 97/cysteine 103.

Belongs to the NPC2 family.

The protein resides in the secreted. The protein is Putative protein heh-1 (heh-1) of Caenorhabditis elegans.